We begin with the raw amino-acid sequence, 191 residues long: Fe/S biogenesis protein NfuA (191 aa).

2 residues coordinate [4Fe-4S] cluster: Cys-149 and Cys-152.

This sequence belongs to the NfuA family. In terms of assembly, homodimer. The cofactor is [4Fe-4S] cluster.

Involved in iron-sulfur cluster biogenesis. Binds a 4Fe-4S cluster, can transfer this cluster to apoproteins, and thereby intervenes in the maturation of Fe/S proteins. Could also act as a scaffold/chaperone for damaged Fe/S proteins. In Hamiltonella defensa subsp. Acyrthosiphon pisum (strain 5AT), this protein is Fe/S biogenesis protein NfuA.